Consider the following 141-residue polypeptide: Large-conductance mechanosensitive channel (141 aa).

A run of 3 helical transmembrane segments spans residues 14–34 (VMDL…VKSL), 38–58 (IIMP…YFLG), and 81–101 (GSFI…FLMV).

Belongs to the MscL family. Homopentamer.

It localises to the cell inner membrane. In terms of biological role, channel that opens in response to stretch forces in the membrane lipid bilayer. May participate in the regulation of osmotic pressure changes within the cell. This Rhizobium rhizogenes (strain K84 / ATCC BAA-868) (Agrobacterium radiobacter) protein is Large-conductance mechanosensitive channel.